The chain runs to 757 residues: Protein ALTERED SEED GERMINATION 2 (757 aa).

6 WD repeats span residues 6–43 (FHDG…LSQE), 48–87 (GHQG…LLHS), 91–132 (GHTA…GRAE), 145–185 (CHTR…SCPP), 213–253 (KQTL…PLAS), and 277–316 (RTNL…CSTG). The Nuclear localization signal motif lies at 245–257 (RRMLPPLASSRKR). A TPR repeat occupies 442-475 (FKAHYYMSEALQQLGKCKEALDFATAAQHMNPSD). The segment at 519–601 (ANSDSSHDMS…SSSQNDRTSY (83 aa)) is disordered. Basic and acidic residues predominate over residues 523–532 (SSHDMSRSER). The segment covering 533 to 543 (EDSDYDEELEL) has biased composition (acidic residues). Residues 582–601 (TVDNASSGTASSSQNDRTSY) show a composition bias toward polar residues. WD repeat units lie at residues 618–658 (NVGT…LMKV) and 661–700 (GDES…PSIV). C754 carries S-12-hydroxyfarnesyl cysteine; by FTB/ERA1 lipidation.

In terms of assembly, interacts with DDB1; the subcellular localization of this complex depends on farnesylation status. Binds to HDA9 in the cytosol when farnesylated. Post-translationally, farnesylated at Cys-754 by FTB/ERA1; this modification triggers an exclusion from the nucleus.

It is found in the nucleus. The protein resides in the cytoplasm. It localises to the cytosol. Its pathway is protein modification; protein ubiquitination. In terms of biological role, may function as a substrate adapter for CUL4-DDB1 E3 ubiquitin-protein ligase complex. Negative regulator of fatty acid biosynthetic process and accumulation. Acts as an abscisic acid (ABA) negative regulator. Involved in responses to salt (NaCl) and osmotic (e.g. in response to mannitol and PEG) stresses. This is Protein ALTERED SEED GERMINATION 2 from Arabidopsis thaliana (Mouse-ear cress).